The sequence spans 968 residues: RNA polymerase-associated protein RapA (968 aa).

The 171-residue stretch at 164 to 334 (DVGRRHAPRV…FARLRLLDPN (171 aa)) folds into the Helicase ATP-binding domain. 177 to 184 (DEVGLGKT) lines the ATP pocket. Positions 280–283 (DEAH) match the DEAH box motif. In terms of domain architecture, Helicase C-terminal spans 490–662 (RVEWLMGYLT…YLASPDQTEG (173 aa)).

This sequence belongs to the SNF2/RAD54 helicase family. RapA subfamily. In terms of assembly, interacts with the RNAP. Has a higher affinity for the core RNAP than for the holoenzyme. Its ATPase activity is stimulated by binding to RNAP.

Functionally, transcription regulator that activates transcription by stimulating RNA polymerase (RNAP) recycling in case of stress conditions such as supercoiled DNA or high salt concentrations. Probably acts by releasing the RNAP, when it is trapped or immobilized on tightly supercoiled DNA. Does not activate transcription on linear DNA. Probably not involved in DNA repair. In Shigella boydii serotype 4 (strain Sb227), this protein is RNA polymerase-associated protein RapA.